We begin with the raw amino-acid sequence, 101 residues long: Putative pterin-4-alpha-carbinolamine dehydratase (101 aa).

Belongs to the pterin-4-alpha-carbinolamine dehydratase family.

It catalyses the reaction (4aS,6R)-4a-hydroxy-L-erythro-5,6,7,8-tetrahydrobiopterin = (6R)-L-erythro-6,7-dihydrobiopterin + H2O. In Rhodopseudomonas palustris (strain BisA53), this protein is Putative pterin-4-alpha-carbinolamine dehydratase.